A 383-amino-acid polypeptide reads, in one-letter code: Protein delta homolog 2 (383 aa).

The first 26 residues, 1-26 (MPSGCRCLHLVCLLCILGAPVKPARG), serve as a signal peptide directing secretion. EGF-like domains lie at 27–58 (NDCS…LHCE), 62–89 (RMPG…KFCD), 91–129 (DEHI…RDCE), and 131–172 (KAGP…ARCE). Residues 27-306 (NDCSSLCDLA…RQEAGLGEPS (280 aa)) are Extracellular-facing. Disulfide bonds link cysteine 29-cysteine 40, cysteine 33-cysteine 46, cysteine 48-cysteine 57, cysteine 66-cysteine 71, cysteine 79-cysteine 88, cysteine 95-cysteine 107, cysteine 101-cysteine 117, cysteine 119-cysteine 128, cysteine 135-cysteine 148, cysteine 142-cysteine 160, cysteine 162-cysteine 171, cysteine 178-cysteine 189, cysteine 183-cysteine 198, cysteine 200-cysteine 209, cysteine 216-cysteine 227, cysteine 221-cysteine 236, and cysteine 238-cysteine 247. Asparagine 157 carries N-linked (GlcNAc...) asparagine glycosylation. One can recognise an EGF-like 5; calcium-binding domain in the interval 174–210 (NVDDCLMRPCANGATCLDGINRFSCLCPEGFTGRFCT). An EGF-like 6; calcium-binding domain is found at 212-248 (NLDDCASRPCQRGARCRDRVHDFDCLCPSGYGGKTCE). Residues 307–327 (LVAVVVFGAVTAALVLSTVLL) form a helical membrane-spanning segment. The Cytoplasmic portion of the chain corresponds to 328–383 (TLRAWRRGFCPPGPCCYPAPHYAPARQDQECQVSMLPTGLPLPPDLPPEPGKTTAL). Positions 364–383 (PTGLPLPPDLPPEPGKTTAL) are disordered. The segment covering 367-377 (LPLPPDLPPEP) has biased composition (pro residues).

The protein localises to the membrane. Regulates adipogenesis. This is Protein delta homolog 2 (DLK2) from Bos taurus (Bovine).